A 377-amino-acid polypeptide reads, in one-letter code: Pyruvate dehydrogenase E1 component subunit alpha, mitochondrial (377 aa).

A mitochondrion-targeting transit peptide spans 1 to 26; the sequence is MLSNFLKVNSKALGHIRTFASKSGEI. Residues His-83, Tyr-109, Arg-110, Gly-156, Val-158, Asp-187, Gly-188, Ala-189, Asn-216, and Tyr-218 each contribute to the pyruvate site. The thiamine diphosphate site is built by Tyr-109, Arg-110, Gly-156, Val-158, Asp-187, Gly-188, Ala-189, and Asn-216. Residue Asp-187 coordinates Mg(2+). Residues Asn-216 and Tyr-218 each coordinate Mg(2+). Residue His-283 coordinates thiamine diphosphate.

Tetramer of 2 alpha and 2 beta subunits. Requires thiamine diphosphate as cofactor. Mg(2+) is required as a cofactor.

The protein resides in the mitochondrion matrix. It carries out the reaction N(6)-[(R)-lipoyl]-L-lysyl-[protein] + pyruvate + H(+) = N(6)-[(R)-S(8)-acetyldihydrolipoyl]-L-lysyl-[protein] + CO2. Its activity is regulated as follows. E1 activity is regulated by phosphorylation (inactivation) and dephosphorylation (activation) of the alpha subunit. Its function is as follows. The pyruvate dehydrogenase complex catalyzes the overall conversion of pyruvate to acetyl-CoA and CO(2). It contains multiple copies of three enzymatic components: pyruvate dehydrogenase (E1), dihydrolipoamide acetyltransferase (E2) and lipoamide dehydrogenase (E3). The polypeptide is Pyruvate dehydrogenase E1 component subunit alpha, mitochondrial (pdhA) (Dictyostelium discoideum (Social amoeba)).